A 152-amino-acid polypeptide reads, in one-letter code: Large ribosomal subunit protein bL21 (152 aa).

Residues 115-152 are disordered; the sequence is VTSISNGEKPKKATTSAKPNTKKPSTAVKSSKVEKTPE. Polar residues predominate over residues 127 to 143; the sequence is ATTSAKPNTKKPSTAVK.

This sequence belongs to the bacterial ribosomal protein bL21 family. In terms of assembly, part of the 50S ribosomal subunit. Contacts protein L20.

Its function is as follows. This protein binds to 23S rRNA in the presence of protein L20. This is Large ribosomal subunit protein bL21 from Prochlorococcus marinus (strain SARG / CCMP1375 / SS120).